Reading from the N-terminus, the 452-residue chain is Flavanone 7-O-glucoside 2''-O-beta-L-rhamnosyltransferase (452 aa).

The active-site Proton acceptor is the H21. An anthocyanidin is bound at residue H21. The active-site Charge relay is the D121. A helical transmembrane segment spans residues 136–156; that stretch reads IAAILFLPLSAVACSFLLHNI. 6 residues coordinate UDP-beta-L-rhamnose: S268, V330, H347, G351, S352, and E355. Positions 407–436 form a coiled coil; that stretch reads KHVVLQEEAKQIRRKANEISESMKKIGDAE.

Belongs to the UDP-glycosyltransferase family. As to quaternary structure, monomer. As to expression, expressed in young fruits and leaves.

It localises to the membrane. It carries out the reaction flavanone 7-O-beta-D-glucoside + UDP-beta-L-rhamnose = flavanone 7-O-[alpha-L-rhamnosyl-(1-&gt;2)-beta-D-glucoside] + UDP + H(+). In terms of biological role, involved in the production of the bitter neohesperidosides in citrus. Shows a strict specificity for UDP-rhamnose as donor. The sequence is that of Flavanone 7-O-glucoside 2''-O-beta-L-rhamnosyltransferase (C12RT1) from Citrus maxima (Pomelo).